Consider the following 199-residue polypeptide: Recombination protein RecR (199 aa).

The C4-type zinc finger occupies 56 to 71 (CRSCFNVAQSELCRIC). Positions 79-174 (SSICVVEEPK…KVTRLASGLP (96 aa)) constitute a Toprim domain.

The protein belongs to the RecR family.

In terms of biological role, may play a role in DNA repair. It seems to be involved in an RecBC-independent recombinational process of DNA repair. It may act with RecF and RecO. The polypeptide is Recombination protein RecR (Frankia casuarinae (strain DSM 45818 / CECT 9043 / HFP020203 / CcI3)).